The sequence spans 142 residues: Large ribosomal subunit protein uL11 (142 aa).

This sequence belongs to the universal ribosomal protein uL11 family. As to quaternary structure, part of the ribosomal stalk of the 50S ribosomal subunit. Interacts with L10 and the large rRNA to form the base of the stalk. L10 forms an elongated spine to which L12 dimers bind in a sequential fashion forming a multimeric L10(L12)X complex. One or more lysine residues are methylated.

Forms part of the ribosomal stalk which helps the ribosome interact with GTP-bound translation factors. In Shewanella amazonensis (strain ATCC BAA-1098 / SB2B), this protein is Large ribosomal subunit protein uL11.